We begin with the raw amino-acid sequence, 675 residues long: Metal-nicotianamine transporter YSL3 (675 aa).

Helical transmembrane passes span 42 to 62, 66 to 86, 114 to 134, 159 to 179, 219 to 239, 280 to 300, 325 to 345, 386 to 406, 408 to 428, 450 to 470, 504 to 524, 556 to 576, 602 to 622, and 630 to 650; these read ITFR…VIVM, LTTG…FVFL, CAVA…LLGL, GIGW…LALV, VFGF…QWFF, IVNI…WPLI, VFIS…KILF, IPLW…IIAI, IMFP…APSL, VALF…AGLV, VSQA…FFLF, FSAL…FAVA, FLVG…VFAW, and AGLM…LWIL.

Belongs to the YSL (TC 2.A.67.2) family. In terms of tissue distribution, expressed in leaves, anthers and pollen grains. Restricted to the vasculature.

It localises to the membrane. Its function is as follows. May be involved in the lateral transport of nicotianamine-chelated metals in the vasculature. This is Metal-nicotianamine transporter YSL3 (YSL3) from Arabidopsis thaliana (Mouse-ear cress).